Here is a 350-residue protein sequence, read N- to C-terminus: Salicylate decarboxylase (350 aa).

It belongs to the metallo-dependent hydrolases superfamily. In terms of assembly, homotetramer.

It carries out the reaction salicylate + H(+) = phenol + CO2. Inhibited by AgNO(3), HgCl(2), p-chloromercuribenzoic acid and NiCl(2). Its function is as follows. Reversibly catalyzes the regioselective carboxylation of phenol to form salicylic acid. Involved in a pathway for the degradation of salicylate via phenol. Also catalyzes the decarboxylation of beta-resorcylic acid (2,4-dihydroxybenzoic acid) into resorcinol (1,3-dihydroxybenzene), gamma-resorcylic acid (2,6-dihydroxybenzoic acid) into resorcinol, 2,3-dihydroxybenzoic acid into catechol (1,2-dihydroxybenzene), and 4-aminosalicylic acid into 3-aminophenol. The sequence is that of Salicylate decarboxylase from Cutaneotrichosporon moniliiforme (Yeast).